A 308-amino-acid chain; its full sequence is Tetraacyldisaccharide 4'-kinase (308 aa).

63–70 (SFGGNGKT) is an ATP binding site.

Belongs to the LpxK family.

The catalysed reaction is a lipid A disaccharide + ATP = a lipid IVA + ADP + H(+). It functions in the pathway glycolipid biosynthesis; lipid IV(A) biosynthesis; lipid IV(A) from (3R)-3-hydroxytetradecanoyl-[acyl-carrier-protein] and UDP-N-acetyl-alpha-D-glucosamine: step 6/6. Functionally, transfers the gamma-phosphate of ATP to the 4'-position of a tetraacyldisaccharide 1-phosphate intermediate (termed DS-1-P) to form tetraacyldisaccharide 1,4'-bis-phosphate (lipid IVA). The polypeptide is Tetraacyldisaccharide 4'-kinase (Campylobacter jejuni (strain RM1221)).